A 380-amino-acid chain; its full sequence is MKIIGIIAEYNPFHNGHLYQIEKVKEIYPESIIIVAMSGNFLQRGEPAIVDKWVRAKQALLNGVDVVVEIPIAGCVQPADRFAENGVRILNNMGCEELFFGAEHAEYDFMTYAQLVQNLDSTEFSKKNISYAEAFQEAVAAKIGHNIDSPNDVLGLAYAKANLKFGKKLKLNPISRNVAGYHDKSLSPDSNIASATAIRKVLFSKDHNLVDKYLPSYQDLKDEKYISWDDFWPFLRYKLISSDIDELANIYGMAEGIQYRMKKKALELKVEATFDEWLKAVKSKRFTYTRLTRLSVATLVGMKVNDVSLYNKFPYVHLLGFTKNGQKALNIMKKNSEIPLLAKISQQDKDDFYHVDYRAGKIYQSQNYKEQDLKRAPLIF.

Residues Ile-7–Gln-20, Gly-101, Asn-151, and Arg-176 contribute to the ATP site.

This sequence belongs to the TmcAL family.

The protein localises to the cytoplasm. The catalysed reaction is cytidine(34) in elongator tRNA(Met) + acetate + ATP = N(4)-acetylcytidine(34) in elongator tRNA(Met) + AMP + diphosphate. Catalyzes the formation of N(4)-acetylcytidine (ac(4)C) at the wobble position of elongator tRNA(Met), using acetate and ATP as substrates. First activates an acetate ion to form acetyladenylate (Ac-AMP) and then transfers the acetyl group to tRNA to form ac(4)C34. In Ligilactobacillus salivarius (strain UCC118) (Lactobacillus salivarius), this protein is tRNA(Met) cytidine acetate ligase.